We begin with the raw amino-acid sequence, 161 residues long: Large ribosomal subunit protein bL21m (161 aa).

A mitochondrion-targeting transit peptide spans 1–35 (MLQLKFIWPVARITPIYRPFTSHPFRNLATSSSIS).

The protein belongs to the bacterial ribosomal protein bL21 family. Component of the mitochondrial large ribosomal subunit (mt-LSU). Mature yeast 74S mitochondrial ribosomes consist of a small (37S) and a large (54S) subunit. The 37S small subunit contains a 15S ribosomal RNA (15S mt-rRNA) and 34 different proteins. The 54S large subunit contains a 21S rRNA (21S mt-rRNA) and 46 different proteins.

Its subcellular location is the mitochondrion. Functionally, component of the mitochondrial ribosome (mitoribosome), a dedicated translation machinery responsible for the synthesis of mitochondrial genome-encoded proteins, including at least some of the essential transmembrane subunits of the mitochondrial respiratory chain. The mitoribosomes are attached to the mitochondrial inner membrane and translation products are cotranslationally integrated into the membrane. This is Large ribosomal subunit protein bL21m (MRPL49) from Saccharomyces cerevisiae (strain ATCC 204508 / S288c) (Baker's yeast).